An 800-amino-acid polypeptide reads, in one-letter code: Phosphate transporter PHO1 homolog 9 (800 aa).

Positions Met-1 to Asn-346 constitute an SPX domain. Residues Met-1–Thr-398 lie on the Cytoplasmic side of the membrane. Disordered regions lie at residues Gln-38 to Ser-77, Asn-91 to His-119, and Pro-212 to Ser-234. Residues Arg-42–Ser-51 show a composition bias toward pro residues. A compositionally biased stretch (gly residues) spans Gly-63–Gly-75. The span at Arg-95–His-119 shows a compositional bias: basic residues. Positions Ser-216 to Arg-229 are enriched in polar residues. Residues Tyr-399 to Val-419 traverse the membrane as a helical segment. Residues His-420–Pro-439 are Extracellular-facing. The helical transmembrane segment at Leu-440–Phe-460 threads the bilayer. Residues Trp-461–Arg-483 are Cytoplasmic-facing. Residues Glu-484–Leu-504 form a helical membrane-spanning segment. Residues Asp-505–Glu-520 lie on the Extracellular side of the membrane. A helical membrane pass occupies residues Leu-521 to Ile-541. The Cytoplasmic segment spans residues Tyr-542–Trp-670. The EXS domain maps to Tyr-606–Val-800. A helical membrane pass occupies residues Leu-671 to Phe-691. Residues Arg-692 to Tyr-718 lie on the Extracellular side of the membrane. Residues Phe-719–Ile-739 form a helical membrane-spanning segment. Over Lys-740–Val-800 the chain is Cytoplasmic.

Belongs to the SYG1 (TC 2.A.94) family. Specifically expressed in pollen grains.

It is found in the cell membrane. Functionally, may transport inorganic phosphate (Pi). This Arabidopsis thaliana (Mouse-ear cress) protein is Phosphate transporter PHO1 homolog 9 (PHO1-H9).